Here is a 111-residue protein sequence, read N- to C-terminus: Anti-adapter protein IraM (111 aa).

It belongs to the IraM/RssC family.

The protein resides in the cytoplasm. Involved in the stabilization of the sigma stress factor RpoS. This chain is Anti-adapter protein IraM, found in Cronobacter sakazakii (strain ATCC BAA-894) (Enterobacter sakazakii).